Reading from the N-terminus, the 1328-residue chain is DNA-directed RNA polymerase subunit beta (1328 aa).

The protein belongs to the RNA polymerase beta chain family. In terms of assembly, the RNAP catalytic core consists of 2 alpha, 1 beta, 1 beta' and 1 omega subunit. When a sigma factor is associated with the core the holoenzyme is formed, which can initiate transcription.

The enzyme catalyses RNA(n) + a ribonucleoside 5'-triphosphate = RNA(n+1) + diphosphate. Its function is as follows. DNA-dependent RNA polymerase catalyzes the transcription of DNA into RNA using the four ribonucleoside triphosphates as substrates. In Karelsulcia muelleri (strain GWSS) (Sulcia muelleri), this protein is DNA-directed RNA polymerase subunit beta.